The chain runs to 318 residues: MSITKNAPREGAEEVAATALGVAAARAAETRRQRPLIVDPFAQLFVDAAGQDLWSMVASGAAHDELASADPALAAVMQTSLGHIASRTKFFDEFVLAAADAGIRQVVSLGAGLDTRAWRLSWPDAVTVYELEQPNVLEFKLATLRDNGATPAANYVDVPVDLHRCWPRSLCLAGFDPAAPTAWLVEGLLPFLSVAAQDLLFGDVHKLSVPGSWLAAEALSSEFLKPTTVARQRARIRRMRVTAATLAGLSNVTELWDLAEGRSDVADWLRGRGWHASVLTAERLLARYHRSAPVELGDATPPSLYVTARLSAESSLDA.

Residues glutamate 132 and 161 to 162 each bind S-adenosyl-L-methionine; that span reads DL.

It belongs to the UPF0677 family.

Exhibits S-adenosyl-L-methionine-dependent methyltransferase activity. The polypeptide is Putative S-adenosyl-L-methionine-dependent methyltransferase MMAR_1595 (Mycobacterium marinum (strain ATCC BAA-535 / M)).